A 299-amino-acid polypeptide reads, in one-letter code: Farnesyl diphosphate synthase (299 aa).

Isopentenyl diphosphate-binding residues include K45, R48, and H77. Residues D84 and D90 each coordinate Mg(2+). R95 contacts (2E)-geranyl diphosphate. Position 96 (R96) interacts with isopentenyl diphosphate. (2E)-geranyl diphosphate is bound by residues K181, T182, Q220, and K237.

The protein belongs to the FPP/GGPP synthase family. It depends on Mg(2+) as a cofactor.

Its subcellular location is the cytoplasm. It carries out the reaction isopentenyl diphosphate + (2E)-geranyl diphosphate = (2E,6E)-farnesyl diphosphate + diphosphate. This is Farnesyl diphosphate synthase (ispA) from Escherichia coli (strain K12).